The following is a 537-amino-acid chain: Tyrosine-protein kinase Fyn (537 aa).

A lipid anchor (N-myristoyl glycine) is attached at G2. 2 S-palmitoyl cysteine lipidation sites follow: C3 and C6. A disordered region spans residues 14-35 (LTEERDGSLNQSSGYRYGTDPT). S21 and S26 each carry phosphoserine. Residues 82 to 143 (TGVTLFVALY…PSNYVAPVDS (62 aa)) form the SH3 domain. The 98-residue stretch at 149 to 246 (WYFGKLGRKD…GLCCRLVVPC (98 aa)) folds into the SH2 domain. At Y185 the chain carries Phosphotyrosine. One can recognise a Protein kinase domain in the interval 271–524 (LQLIKRLGNG…YLQGFLEDYF (254 aa)). ATP contacts are provided by residues 277-285 (LGNGQFGEV) and K299. Catalysis depends on D390, which acts as the Proton acceptor. At Y420 the chain carries Phosphotyrosine; by autocatalysis. Y531 carries the phosphotyrosine modification.

It belongs to the protein kinase superfamily. Tyr protein kinase family. SRC subfamily. Interacts (via its SH3 domain) with PIK3R1 and PRMT8. Interacts with FYB1, PAG1, and SH2D1A. Interacts with CD79A (tyrosine-phosphorylated form); the interaction increases FYN activity. Interacts (via SH2 domain) with CSF1R (tyrosine phosphorylated). Interacts with TOM1L1 (phosphorylated form). Interacts with KDR (tyrosine phosphorylated). Interacts (via SH3 domain) with KLHL2 (via N-terminus). Interacts with SH2D1A and SLAMF1. Interacts with ITCH; the interaction phosphorylates ITCH and negatively regulates its activity. Interacts with FASLG. Interacts with RUNX3. Interacts with KIT. Interacts with EPHA8; possible downstream effector of EPHA8 in regulation of cell adhesion. Interacts with PTK2/FAK1; this interaction leads to PTK2/FAK1 phosphorylation and activation. Interacts with CAV1; this interaction couples integrins to the Ras-ERK pathway. Interacts with UNC119. Interacts (via SH2 domain) with PTPRH (phosphorylated form). Interacts with PTPRO (phosphorylated form). Interacts with PTPRB (phosphorylated form). Interacts with FYB2. Interacts with DSCAM. Interacts with SKAP1 and FYB1; this interaction promotes the phosphorylation of CLNK. Interacts with NEDD9; in the presence of PTK2. Mn(2+) serves as cofactor. In terms of processing, autophosphorylated at Tyr-420. Phosphorylation on the C-terminal tail at Tyr-531 by CSK maintains the enzyme in an inactive state. PTPRC/CD45 dephosphorylates Tyr-531 leading to activation. Dephosphorylation at Tyr-420 by PTPN2 negatively regulates T-cell receptor signaling. Phosphorylated at tyrosine residues, which can be enhanced by NTN1. Post-translationally, palmitoylated. Palmitoylation at Cys-3 and Cys-6, probably by ZDHHC21, regulates subcellular location. Detected in spinal cord oligodendrocytes (at protein level).

The protein resides in the cytoplasm. The protein localises to the nucleus. It is found in the cell membrane. Its subcellular location is the perikaryon. The catalysed reaction is L-tyrosyl-[protein] + ATP = O-phospho-L-tyrosyl-[protein] + ADP + H(+). With respect to regulation, inhibited by phosphorylation of Tyr-531 by leukocyte common antigen and activated by dephosphorylation of this site. Its function is as follows. Non-receptor tyrosine-protein kinase that plays a role in many biological processes including regulation of cell growth and survival, cell adhesion, integrin-mediated signaling, cytoskeletal remodeling, cell motility, immune response and axon guidance. Inactive FYN is phosphorylated on its C-terminal tail within the catalytic domain. Following activation by PKA, the protein subsequently associates with PTK2/FAK1, allowing PTK2/FAK1 phosphorylation, activation and targeting to focal adhesions. Involved in the regulation of cell adhesion and motility through phosphorylation of CTNNB1 (beta-catenin) and CTNND1 (delta-catenin). Regulates cytoskeletal remodeling by phosphorylating several proteins including the actin regulator WAS and the microtubule-associated proteins MAP2 and MAPT. Promotes cell survival by phosphorylating AGAP2/PIKE-A and preventing its apoptotic cleavage. Participates in signal transduction pathways that regulate the integrity of the glomerular slit diaphragm (an essential part of the glomerular filter of the kidney) by phosphorylating several slit diaphragm components including NPHS1, KIRREL1 and TRPC6. Plays a role in neural processes by phosphorylating DPYSL2, a multifunctional adapter protein within the central nervous system, ARHGAP32, a regulator for Rho family GTPases implicated in various neural functions, and SNCA, a small pre-synaptic protein. Involved in reelin signaling by mediating phosphorylation of DAB1 following reelin (RELN)-binding to its receptor. Participates in the downstream signaling pathways that lead to T-cell differentiation and proliferation following T-cell receptor (TCR) stimulation. Phosphorylates PTK2B/PYK2 in response to T-cell receptor activation. Also participates in negative feedback regulation of TCR signaling through phosphorylation of PAG1, thereby promoting interaction between PAG1 and CSK and recruitment of CSK to lipid rafts. CSK maintains LCK and FYN in an inactive form. Promotes CD28-induced phosphorylation of VAV1. In mast cells, phosphorylates CLNK after activation of immunoglobulin epsilon receptor signaling. Can also promote CD244-mediated NK cell activation. The protein is Tyrosine-protein kinase Fyn of Rattus norvegicus (Rat).